We begin with the raw amino-acid sequence, 131 residues long: Fatty acid-binding protein (131 aa).

Residues Arg-106 and 126-128 (RFY) contribute to the (5Z,8Z,11Z,14Z)-eicosatetraenoate site. (9Z)-octadecenoate-binding positions include Arg-106 and 126 to 128 (RFY).

It belongs to the calycin superfamily. Fatty-acid binding protein (FABP) family.

Its subcellular location is the cytoplasm. Functionally, FABPs are thought to play a role in the intracellular transport of long-chain fatty acids and their acyl-CoA esters. In Tyrophagus putrescentiae (Mold mite), this protein is Fatty acid-binding protein.